The chain runs to 142 residues: Large ribosomal subunit protein uL13 (142 aa).

This sequence belongs to the universal ribosomal protein uL13 family. Part of the 50S ribosomal subunit.

This protein is one of the early assembly proteins of the 50S ribosomal subunit, although it is not seen to bind rRNA by itself. It is important during the early stages of 50S assembly. The sequence is that of Large ribosomal subunit protein uL13 from Hydrogenovibrio crunogenus (strain DSM 25203 / XCL-2) (Thiomicrospira crunogena).